A 146-amino-acid polypeptide reads, in one-letter code: uncharacterized protein (146 aa).

An N-acetyltransferase domain is found at 7-146 (LEINYKTDEL…EGHDVLLWKP (140 aa)).

This is an uncharacterized protein from Staphylococcus aureus (strain COL).